Consider the following 432-residue polypeptide: DNA damage-binding protein 2 (432 aa).

Residues 1–31 (MAPKKCPETQKSPDVAVLLRSKSRRGPQELE) form a disordered region. N6-acetyllysine is present on residues Lys-35 and Lys-77. Required for interaction with DDB1 regions lie at residues 68–79 (SIVRDLYQHKLG) and 87–98 (QQGLQKSFLHSL). WD repeat units follow at residues 116–151 (SLAW…IFLK), 159–194 (ITGL…LRVY), 203–238 (WFCS…LWNL), 244–287 (KVAH…SLPH), and 290–329 (PVNA…LISH). Residues 256–274 (WLLATASIDQTVKIWDLRQ) carry the DWD box motif. Positions 334-336 (FQH) are photolesion recognition. 2 WD repeats span residues 343–386 (TWHS…MCQL) and 396–420 (SLNE…IWSQ).

It belongs to the WD repeat DDB2/WDR76 family. In terms of assembly, component of the UV-DDB complex which includes DDB1 and DDB2. The UV-DDB complex interacts with monoubiquitinated histone H2A and binds to XPC via the DDB2 subunit. Component of the DCX (DDB1-CUL4-X-box) E3 ubiquitin-protein ligase complex DDB1-CUL4-ROC1 (also known as CUL4-DDB-ROC1 and CUL4-DDB-RBX1), which includes CUL4A or CUL4B, DDB1, DDB2 and RBX1. DDB2 may function as the substrate recognition module within this complex. The DDB1-CUL4-ROC1 complex may associate with the COP9 signalosome, and this inhibits the E3 ubiquitin-protein ligase activity of the complex. A large number of other DCX complexes may also exist in which an alternate substrate targeting subunit replaces DDB2. These targeting subunits are generally known as DCAF (DDB1- and CUL4-associated factor) or CDW (CUL4-DDB1-associated WD40-repeat) proteins. Phosphorylation by ABL1 negatively regulate UV-DDB activity. In terms of processing, ubiquitinated by CUL4A in response to UV irradiation. Ubiquitination appears to both impair DNA-binding and promotes ubiquitin-dependent proteolysis. Degradation of DDB2 at sites of DNA damage may be a prerequisite for their recognition by XPC and subsequent repair. CUL4A-mediated degradation appears to be promoted by ABL1. Post-translationally, ubiquitinated, leading to proteasomal degradation, and deubiquitinated by USP24. Deubiquitinated by USP44; leading to its stabilization on DNA lesions. Acetylated. Deacetylation by SIRT6 in response to UV stress facilitates nucleotide excision repair pathway (the NER pathway) transduction. As to expression, expressed in bone marrow, liver, lung, muscle, pancreas and spleen.

The protein localises to the nucleus. It localises to the chromosome. The protein operates within protein modification; protein ubiquitination. In terms of biological role, protein, which is both involved in DNA repair and protein ubiquitination, as part of the UV-DDB complex and DCX (DDB1-CUL4-X-box) complexes, respectively. Core component of the UV-DDB complex (UV-damaged DNA-binding protein complex), a complex that recognizes UV-induced DNA damage and recruit proteins of the nucleotide excision repair pathway (the NER pathway) to initiate DNA repair. The UV-DDB complex preferentially binds to cyclobutane pyrimidine dimers (CPD), 6-4 photoproducts (6-4 PP), apurinic sites and short mismatches. Also functions as the substrate recognition module for the DCX (DDB2-CUL4-X-box) E3 ubiquitin-protein ligase complex DDB2-CUL4-ROC1 (also known as CUL4-DDB-ROC1 and CUL4-DDB-RBX1). The DDB2-CUL4-ROC1 complex may ubiquitinate histone H2A, histone H3 and histone H4 at sites of UV-induced DNA damage. The ubiquitination of histones may facilitate their removal from the nucleosome and promote subsequent DNA repair. The DDB2-CUL4-ROC1 complex also ubiquitinates XPC, which may enhance DNA-binding by XPC and promote NER. The DDB2-CUL4-ROC1 complex also ubiquitinates KAT7/HBO1 in response to DNA damage, leading to its degradation: recognizes KAT7/HBO1 following phosphorylation by ATR. This is DNA damage-binding protein 2 (Ddb2) from Mus musculus (Mouse).